A 180-amino-acid polypeptide reads, in one-letter code: uncharacterized protein (180 aa).

This sequence belongs to the isochorismatase family.

This is an uncharacterized protein from Bacillus subtilis (strain 168).